A 166-amino-acid chain; its full sequence is Myosin regulatory light chain 2, ventricular/cardiac muscle isoform (166 aa).

At A2 the chain carries N,N,N-trimethylalanine. A phosphoserine; by MLCK mark is found at S14 and S15. S19 is modified (phosphoserine). 3 EF-hand domains span residues 24–59, 94–129, and 130–165; these read TQIQ…LGRV, DPEE…QAER, and FSKE…GEEK. Ca(2+) is bound by residues D37, N39, D41, and D48. Position 52 is a phosphothreonine (T52).

In terms of assembly, myosin is a hexamer of 2 heavy chains and 4 light chains. Interacts with MYOC. In terms of processing, N-terminus is methylated by METTL11A/NTM1. Post-translationally, phosphorylated by MYLK3 and MYLK2; promotes cardiac muscle contraction and function. Dephosphorylated by PPP1CB complexed to PPP1R12B. The phosphorylated form in adult is expressed as gradients across the heart from endocardium (low phosphorylation) to epicardium (high phosphorylation); regulates cardiac torsion and workload distribution. Abundantly expressed in both cardiac and slow skeletal muscle. In the adult heart, the phosphorylated form is highly expressed in epicardium and weakly in endocardium.

It is found in the cytoplasm. Its subcellular location is the myofibril. The protein resides in the sarcomere. It localises to the a band. Its function is as follows. Contractile protein that plays a role in heart development and function. Following phosphorylation, plays a role in cross-bridge cycling kinetics and cardiac muscle contraction by increasing myosin lever arm stiffness and promoting myosin head diffusion; as a consequence of the increase in maximum contraction force and calcium sensitivity of contraction force. These events altogether slow down myosin kinetics and prolong duty cycle resulting in accumulated myosins being cooperatively recruited to actin binding sites to sustain thin filament activation as a means to fine-tune myofilament calcium sensitivity to force. During cardiogenesis plays an early role in cardiac contractility by promoting cardiac myofibril assembly. This chain is Myosin regulatory light chain 2, ventricular/cardiac muscle isoform, found in Mus musculus (Mouse).